The primary structure comprises 258 residues: 5'-nucleotidase SurE (258 aa).

A divalent metal cation-binding residues include Asp18, Asp19, Ser49, and Asn102.

It belongs to the SurE nucleotidase family. It depends on a divalent metal cation as a cofactor.

It localises to the cytoplasm. It catalyses the reaction a ribonucleoside 5'-phosphate + H2O = a ribonucleoside + phosphate. Its function is as follows. Nucleotidase that shows phosphatase activity on nucleoside 5'-monophosphates. This chain is 5'-nucleotidase SurE, found in Vibrio parahaemolyticus serotype O3:K6 (strain RIMD 2210633).